Consider the following 990-residue polypeptide: Activator of stress genes protein 1 (990 aa).

Residues 1-88 (MPKREIEDTQ…NKPKSQENKR (88 aa)) form a disordered region. Polar residues predominate over residues 9 to 23 (TQSPYSSTGLVSTGE). Over residues 24–61 (SPKTSTSTPTSSTNNRAATTTTNNTSTTSTSLLKSNSN) the composition is skewed to low complexity. Positions 95–121 (CDTCRQKKVKCDGKQPCIHCTVYSYKC) form a DNA-binding region, zn(2)-C6 fungal-type. Low complexity-rich tracts occupy residues 160-179 (NNNS…QQHV), 282-293 (SFDDSSNSAVSS), and 773-793 (TATT…NSNS). 4 disordered regions span residues 160-192 (NNNS…PADE), 255-295 (QDPD…SSPR), 764-800 (RTAS…TLPA), and 915-944 (SNNN…NGVA).

This sequence belongs to the ASG1 family.

The protein localises to the nucleus. In terms of biological role, transcription factor necessary to sustain growth on non-fermentative carbon sources such as sodium acetate, acetic acid, or ethanol. Plays a role in hyphal formation. In Candida albicans (strain SC5314 / ATCC MYA-2876) (Yeast), this protein is Activator of stress genes protein 1 (ASG1).